The sequence spans 715 residues: Polyribonucleotide nucleotidyltransferase (715 aa).

Residues aspartate 487 and aspartate 493 each coordinate Mg(2+). The KH domain occupies 554-613 (PRLYTFKINPEKIRDVIGKGGAVIRALTEETGTTIDIQDDGTITIAATSGEAAAAARSRI). The S1 motif domain maps to 623 to 691 (GKIYEGTVLK…DRGRVKLSMK (69 aa)).

The protein belongs to the polyribonucleotide nucleotidyltransferase family. Mg(2+) is required as a cofactor.

The protein localises to the cytoplasm. It catalyses the reaction RNA(n+1) + phosphate = RNA(n) + a ribonucleoside 5'-diphosphate. Its function is as follows. Involved in mRNA degradation. Catalyzes the phosphorolysis of single-stranded polyribonucleotides processively in the 3'- to 5'-direction. The protein is Polyribonucleotide nucleotidyltransferase of Dechloromonas aromatica (strain RCB).